The primary structure comprises 121 residues: MISRVTEALSKVKGSIGSNERHALPGVIGDDLLRFGKLPLCLFICIILTAVTVVTTAHHTRLLTAQREQLVLERDALDIEWRNLILEENALGDHSRVERIATEKLQMQHVDPSQENIVVQK.

Residues 1–34 (MISRVTEALSKVKGSIGSNERHALPGVIGDDLLR) are Cytoplasmic-facing. Residues 35-57 (FGKLPLCLFICIILTAVTVVTTA) form a helical membrane-spanning segment. The Periplasmic portion of the chain corresponds to 58 to 121 (HHTRLLTAQR…PSQENIVVQK (64 aa)).

The protein belongs to the FtsL family. As to quaternary structure, part of a complex composed of FtsB, FtsL and FtsQ.

Its subcellular location is the cell inner membrane. In terms of biological role, essential cell division protein. May link together the upstream cell division proteins, which are predominantly cytoplasmic, with the downstream cell division proteins, which are predominantly periplasmic. The protein is Cell division protein FtsL of Salmonella typhimurium (strain LT2 / SGSC1412 / ATCC 700720).